Consider the following 805-residue polypeptide: Pentatricopeptide repeat-containing protein At4g01570 (805 aa).

PPR repeat units follow at residues 91-125 (SATAYSQIFRTVCRTGLLGEVPDLLGSMKEDGVNL), 126-160 (DQTMAKILLDSLIRSGKFESALGVLDYMEELGDCL), 161-196 (NPSVYDSVLIALVKKHELRLALSILFKLLEASDNHS), 211-241 (GTVAVNELLVGLRRADMRSEFKRVFEKLKGM), 247-277 (DTWSYNICIHGFGCWGDLDAALSLFKEMKER), 288-322 (DICTYNSLIHVLCLFGKAKDALIVWDELKVSGHEP), 323-357 (DNSTYRILIQGCCKSYRMDDAMRIYGEMQYNGFVP), 358-392 (DTIVYNCLLDGTLKARKVTEACQLFEKMVQEGVRA), 393-427 (SCWTYNILIDGLFRNGRAEAGFTLFCDLKKKGQFV), 428-462 (DAITFSIVGLQLCREGKLEGAVKLVEEMETRGFSV), 463-497 (DLVTISSLLIGFHKQGRWDWKEKLMKHIREGNLVP), 593-627 (DVDMMNTFLSIYLSKGDLSLACKLFEIFNGMGVTD), 629-663 (TSYTYNSMMSSFVKKGYFQTARGVLDQMFENFCAA), 664-698 (DIATYNVIIQGLGKMGRADLASAVLDRLTKQGGYL), 699-733 (DIVMYNTLINALGKATRLDEATQLFDHMKSNGINP), and 734-768 (DVVSYNTMIEVNSKAGKLKEAYKYLKAMLDAGCLP).

The protein belongs to the PPR family. P subfamily.

In Arabidopsis thaliana (Mouse-ear cress), this protein is Pentatricopeptide repeat-containing protein At4g01570.